Reading from the N-terminus, the 217-residue chain is Glycine betaine/carnitine/choline transport system permease protein OpuCB (217 aa).

Residues 19 to 198 (TGEHLYISLI…ILAIIIDYVL (180 aa)) form the ABC transmembrane type-1 domain. The next 6 helical transmembrane spans lie at 23 to 43 (LYIS…LGVA), 52 to 74 (GAVI…AFFI), 84 to 101 (AIVA…RNTY), 128 to 148 (LVEI…STIY), 150 to 170 (IGWA…YIFI), and 180 to 200 (IIGG…VLAV).

It belongs to the binding-protein-dependent transport system permease family. CysTW subfamily. In terms of assembly, the complex is composed of two ATP-binding proteins (OpuCA), two transmembrane proteins (OpuCB and OpuCD) and a solute-binding protein (OpuCC).

It is found in the cell membrane. Its function is as follows. Involved in a high affinity multicomponent binding-protein-dependent transport system for glycine betaine, carnitine and choline; probably responsible for the translocation of the substrate across the membrane. This Bacillus subtilis (strain 168) protein is Glycine betaine/carnitine/choline transport system permease protein OpuCB (opuCB).